The primary structure comprises 73 residues: MRMSFYQFLMTQRNPNSADEVQQFANNAFFDTTFPKHSEDFDEISHYLEENADYLPSMTIFDEAWQRYIDAMN.

Belongs to the UPF0346 family.

The polypeptide is UPF0346 protein Lreu_0775 (Limosilactobacillus reuteri (strain DSM 20016) (Lactobacillus reuteri)).